We begin with the raw amino-acid sequence, 441 residues long: Xylose isomerase (441 aa).

Residues H100 and D103 contribute to the active site. Residues E231, E267, H270, D295, D306, D308, and D338 each contribute to the Mg(2+) site.

It belongs to the xylose isomerase family. Homotetramer. Mg(2+) is required as a cofactor.

Its subcellular location is the cytoplasm. It carries out the reaction alpha-D-xylose = alpha-D-xylulofuranose. In Paraburkholderia phymatum (strain DSM 17167 / CIP 108236 / LMG 21445 / STM815) (Burkholderia phymatum), this protein is Xylose isomerase.